The sequence spans 363 residues: NAD(P)H-quinone oxidoreductase subunit 1, chloroplastic (363 aa).

6 consecutive transmembrane segments (helical) span residues 30–50, 98–118, 129–149, 248–268, 300–320, and 343–363; these read LVPI…IVWL, FSIG…VIPF, IGIF…LMSG, YSGI…LLSS, IIGT…FLFI, and FLLP…LLSL.

Belongs to the complex I subunit 1 family. In terms of assembly, NDH is composed of at least 16 different subunits, 5 of which are encoded in the nucleus.

It localises to the plastid. It is found in the chloroplast thylakoid membrane. It catalyses the reaction a plastoquinone + NADH + (n+1) H(+)(in) = a plastoquinol + NAD(+) + n H(+)(out). The enzyme catalyses a plastoquinone + NADPH + (n+1) H(+)(in) = a plastoquinol + NADP(+) + n H(+)(out). Its function is as follows. NDH shuttles electrons from NAD(P)H:plastoquinone, via FMN and iron-sulfur (Fe-S) centers, to quinones in the photosynthetic chain and possibly in a chloroplast respiratory chain. The immediate electron acceptor for the enzyme in this species is believed to be plastoquinone. Couples the redox reaction to proton translocation, and thus conserves the redox energy in a proton gradient. The chain is NAD(P)H-quinone oxidoreductase subunit 1, chloroplastic from Gossypium hirsutum (Upland cotton).